Consider the following 357-residue polypeptide: Adenylate isopentenyltransferase 1, chloroplastic (357 aa).

The N-terminal 71 residues, 1-71 (MTELNFHLLP…NRKDKVVVIL (71 aa)), are a transit peptide targeting the chloroplast. The segment covering 20-39 (TTTSPSFSSHSSSSSSLLSF) has biased composition (low complexity). Positions 20–58 (TTTSPSFSSHSSSSSSLLSFTKRRRKHQPLVSSIRMEQS) are disordered. Residue 72–79 (GATGAGKS) participates in ATP binding.

Belongs to the IPP transferase family. In terms of tissue distribution, expressed in the vascular stele of the roots, in the xylem precursor cell files in the root tip, in leaf axils, ovules, and immature seeds.

Its subcellular location is the plastid. The protein resides in the chloroplast. It carries out the reaction dimethylallyl diphosphate + AMP = N(6)-(dimethylallyl)adenosine 5'-phosphate + diphosphate. The enzyme catalyses dimethylallyl diphosphate + ADP = N(6)-(dimethylallyl)adenosine 5'-diphosphate + diphosphate. The catalysed reaction is dimethylallyl diphosphate + ATP = N(6)-(dimethylallyl)adenosine 5'-triphosphate + diphosphate. Functionally, involved in cytokinin biosynthesis. Catalyzes the transfer of an isopentenyl group from dimethylallyl diphosphate (DMAPP) to ATP, ADP and AMP. Adenine, adenosine, isopentenylpyrophosphate and 1-hydroxy-2-methyl-2-(E)-butenyl 4-diphosphate (HMBDP) are not used as substrates. The protein is Adenylate isopentenyltransferase 1, chloroplastic (IPT1) of Arabidopsis thaliana (Mouse-ear cress).